Consider the following 582-residue polypeptide: V-type ATP synthase alpha chain (582 aa).

231–238 contributes to the ATP binding site; the sequence is GPFGSGKT.

This sequence belongs to the ATPase alpha/beta chains family.

It catalyses the reaction ATP + H2O + 4 H(+)(in) = ADP + phosphate + 5 H(+)(out). Produces ATP from ADP in the presence of a proton gradient across the membrane. The V-type alpha chain is a catalytic subunit. The polypeptide is V-type ATP synthase alpha chain (Deinococcus geothermalis (strain DSM 11300 / CIP 105573 / AG-3a)).